Reading from the N-terminus, the 474-residue chain is MTVKTRFAPSPTGFLHVGGARTALYSWLFAKHMGGEFVLRIEDTDLERSTQEAIDAILEGMEWLGMDWDEGPYYQTKRFDRYNQLVDQLLAEDKAYKCYCPKALLDELREEQMAAGVKPRYDANHPKIVAANAAATEDSAFCIRFRNPKEGTVVFEDKVRGRIEIANSELDDLIIRRTDGSPTYNFCVVIDDWDMGITQVVRGEDHINNTPRQINIYKAIGAPVPEFAHCAMILGDDGAKLSKRHGAVSVMQYRDEGYLPQALLNYLIRLGWSHGDQEIFSMEEMINLFSLESISKSASAFNTDKLLWLNNHYIKTAEPEYVAKYLQWHLEQKEIDTANGPKITDVIGLVGERCNTLIELADQSRYFYQDFSEFEAGAAKKHLRPVAKDALALVLSKVEALEEWNTENLHVVIADTCTELEVGMGKVGMPLRVAVTGQGQSPSVDATMMLIGKERVVNRITMALAFIAEREANA.

Positions 9–19 (PSPTGFLHVGG) match the 'HIGH' region motif. A 'KMSKS' region motif is present at residues 240 to 244 (KLSKR). K243 provides a ligand contact to ATP.

Belongs to the class-I aminoacyl-tRNA synthetase family. Glutamate--tRNA ligase type 1 subfamily. In terms of assembly, monomer.

It localises to the cytoplasm. It carries out the reaction tRNA(Glu) + L-glutamate + ATP = L-glutamyl-tRNA(Glu) + AMP + diphosphate. In terms of biological role, catalyzes the attachment of glutamate to tRNA(Glu) in a two-step reaction: glutamate is first activated by ATP to form Glu-AMP and then transferred to the acceptor end of tRNA(Glu). This chain is Glutamate--tRNA ligase, found in Photobacterium profundum (strain SS9).